Here is a 494-residue protein sequence, read N- to C-terminus: Glycosyl hydrolase family 109 protein (494 aa).

Residues 1–32 (MNDDARPAPEPQDIPPHSGAADEVNRQDPSRR) are disordered. The segment at residues 1–58 (MNDDARPAPEPQDIPPHSGAADEVNRQDPSRRSVLWTTAGVAGAGLGLGALGAGTASA) is a signal peptide (tat-type signal). Residues 104-105 (NR), Asp126, 175-178 (WELH), 195-196 (EC), and Asn224 contribute to the NAD(+) site. Residues Tyr253, Arg272, 284 to 287 (YPNH), and Tyr366 contribute to the substrate site. Residue Tyr284 coordinates NAD(+).

It belongs to the Gfo/Idh/MocA family. Glycosyl hydrolase 109 subfamily. The cofactor is NAD(+). Post-translationally, predicted to be exported by the Tat system. The position of the signal peptide cleavage has not been experimentally proven.

In terms of biological role, glycosidase. The polypeptide is Glycosyl hydrolase family 109 protein (Streptomyces filamentosus (Streptomyces roseosporus)).